The primary structure comprises 31 residues: Cyclotide mden-K (31 aa).

Positions 1 to 31 form a cross-link, cyclopeptide (Gly-Asn); sequence GSIPCGESCVWIPCISSVVGCACKNKVCYKN. Cystine bridges form between Cys5-Cys21, Cys9-Cys23, and Cys14-Cys28.

The protein belongs to the cyclotide family. Bracelet subfamily. This is a cyclic peptide.

Its function is as follows. Probably participates in a plant defense mechanism. This Melicytus dentatus (Tree violet) protein is Cyclotide mden-K.